The chain runs to 338 residues: uncharacterized protein (338 aa).

The TNase-like domain maps to His-144 to Ser-321. Catalysis depends on residues Arg-228, Glu-236, and Arg-270.

This is an uncharacterized protein from Capnoides sempervirens (Rock-harlequin).